The sequence spans 411 residues: Glutamate dehydrogenase 1, mitochondrial (411 aa).

The N-terminal 18 residues, 1-18 (MNALAATSRNFKQAAKLL), are a transit peptide targeting the mitochondrion. Lysine 102 is an active-site residue.

It belongs to the Glu/Leu/Phe/Val dehydrogenases family.

The protein resides in the mitochondrion. It catalyses the reaction L-glutamate + NAD(+) + H2O = 2-oxoglutarate + NH4(+) + NADH + H(+). The enzyme catalyses L-glutamate + NADP(+) + H2O = 2-oxoglutarate + NH4(+) + NADPH + H(+). This is Glutamate dehydrogenase 1, mitochondrial (GDH1) from Oryza sativa subsp. indica (Rice).